Reading from the N-terminus, the 355-residue chain is Polyferredoxin protein FwdF (355 aa).

4Fe-4S ferredoxin-type domains lie at 24-53, 64-93, 108-137, 147-176, 187-216, 235-264, 267-296, and 304-333; these read RELC…MGPL, PKLD…LKIN, RDIK…VERE, GEIN…LKYN, TDIE…VICY, GKTV…VEKP, GELI…FPKP, and PRII…VKRT. [4Fe-4S] cluster is bound by residues Cys33, Cys36, Cys39, Cys43, Cys73, Cys76, Cys79, Cys83, Cys117, Cys120, Cys123, Cys127, Cys156, Cys159, Cys162, Cys166, Cys196, Cys199, Cys202, Cys206, Cys244, Cys247, Cys250, Cys254, Cys276, Cys279, Cys282, Cys286, Cys313, Cys316, Cys319, and Cys323.

[4Fe-4S] cluster is required as a cofactor.

The chain is Polyferredoxin protein FwdF (fwdF) from Methanocaldococcus jannaschii (strain ATCC 43067 / DSM 2661 / JAL-1 / JCM 10045 / NBRC 100440) (Methanococcus jannaschii).